Consider the following 901-residue polypeptide: DNA mismatch repair protein MutS (901 aa).

Residues 1-12 (MKYSASTSTPKS) show a composition bias toward polar residues. The tract at residues 1–25 (MKYSASTSTPKSAQPKEEELENSLP) is disordered. 679–686 (GPNASGKS) provides a ligand contact to ATP.

It belongs to the DNA mismatch repair MutS family.

This protein is involved in the repair of mismatches in DNA. It is possible that it carries out the mismatch recognition step. This protein has a weak ATPase activity. This chain is DNA mismatch repair protein MutS, found in Trichodesmium erythraeum (strain IMS101).